We begin with the raw amino-acid sequence, 84 residues long: Phosphoribosylformylglycinamidine synthase subunit PurS (84 aa).

The protein belongs to the PurS family. As to quaternary structure, homodimer. Part of the FGAM synthase complex composed of 1 PurL, 1 PurQ and 2 PurS subunits.

The protein localises to the cytoplasm. It carries out the reaction N(2)-formyl-N(1)-(5-phospho-beta-D-ribosyl)glycinamide + L-glutamine + ATP + H2O = 2-formamido-N(1)-(5-O-phospho-beta-D-ribosyl)acetamidine + L-glutamate + ADP + phosphate + H(+). Its pathway is purine metabolism; IMP biosynthesis via de novo pathway; 5-amino-1-(5-phospho-D-ribosyl)imidazole from N(2)-formyl-N(1)-(5-phospho-D-ribosyl)glycinamide: step 1/2. Its function is as follows. Part of the phosphoribosylformylglycinamidine synthase complex involved in the purines biosynthetic pathway. Catalyzes the ATP-dependent conversion of formylglycinamide ribonucleotide (FGAR) and glutamine to yield formylglycinamidine ribonucleotide (FGAM) and glutamate. The FGAM synthase complex is composed of three subunits. PurQ produces an ammonia molecule by converting glutamine to glutamate. PurL transfers the ammonia molecule to FGAR to form FGAM in an ATP-dependent manner. PurS interacts with PurQ and PurL and is thought to assist in the transfer of the ammonia molecule from PurQ to PurL. The sequence is that of Phosphoribosylformylglycinamidine synthase subunit PurS from Methanothermobacter thermautotrophicus (strain ATCC 29096 / DSM 1053 / JCM 10044 / NBRC 100330 / Delta H) (Methanobacterium thermoautotrophicum).